Consider the following 84-residue polypeptide: Large ribosomal subunit protein bL31B (84 aa).

It belongs to the bacterial ribosomal protein bL31 family. Type B subfamily. As to quaternary structure, part of the 50S ribosomal subunit.

This Photorhabdus laumondii subsp. laumondii (strain DSM 15139 / CIP 105565 / TT01) (Photorhabdus luminescens subsp. laumondii) protein is Large ribosomal subunit protein bL31B.